Consider the following 183-residue polypeptide: Glutathione-regulated potassium-efflux system ancillary protein KefG (183 aa).

Belongs to the NAD(P)H dehydrogenase (quinone) family. KefG subfamily. Interacts with KefB.

Its subcellular location is the cell inner membrane. It carries out the reaction a quinone + NADH + H(+) = a quinol + NAD(+). It catalyses the reaction a quinone + NADPH + H(+) = a quinol + NADP(+). Functionally, regulatory subunit of a potassium efflux system that confers protection against electrophiles. Required for full activity of KefB. The protein is Glutathione-regulated potassium-efflux system ancillary protein KefG of Shigella flexneri serotype 5b (strain 8401).